Reading from the N-terminus, the 298-residue chain is Putative glycylpeptide N-tetradecanoyltransferase (298 aa).

Belongs to the NMT family.

It catalyses the reaction N-terminal glycyl-[protein] + tetradecanoyl-CoA = N-tetradecanoylglycyl-[protein] + CoA + H(+). In terms of biological role, adds a myristoyl group to the N-terminal glycine residue of certain proteins. The chain is Putative glycylpeptide N-tetradecanoyltransferase from Melanoplus sanguinipes (Migratory grasshopper).